We begin with the raw amino-acid sequence, 290 residues long: Protein CREG2 (290 aa).

Residues 1–31 form the signal peptide; sequence MSVRRGRRPARPGTRLSWLLCCSALLSPAAG. Residues asparagine 165 and asparagine 166 are each glycosylated (N-linked (GlcNAc...) asparagine).

Belongs to the CREG family. It is not sure whether N-glycosylation is on Asn-165 and/or Asn-166. Brain specific mainly in the limbic system and faintly in the spinal cord but not in cerebellum.

The protein resides in the secreted. The protein is Protein CREG2 (CREG2) of Homo sapiens (Human).